The primary structure comprises 502 residues: ATP synthase subunit alpha, sodium ion specific (502 aa).

169–176 (GDRQTGKT) is an ATP binding site.

The protein belongs to the ATPase alpha/beta chains family. In terms of assembly, F-type ATPases have 2 components, CF(1) - the catalytic core - and CF(0) - the membrane proton channel. CF(1) has five subunits: alpha(3), beta(3), gamma(1), delta(1), epsilon(1). CF(0) has three main subunits: a, b and c.

The protein resides in the cell membrane. It carries out the reaction 4 Na(+)(in) + ATP + H2O = 4 Na(+)(out) + ADP + phosphate + H(+). Its activity is regulated as follows. Inhibited by nitrate. Produces ATP from ADP in the presence of a sodium ion gradient across the membrane. The alpha chain is a regulatory subunit. This is ATP synthase subunit alpha, sodium ion specific from Acetobacterium woodii (strain ATCC 29683 / DSM 1030 / JCM 2381 / KCTC 1655 / WB1).